The following is a 691-amino-acid chain: Alpha-1,4-glucan:maltose-1-phosphate maltosyltransferase (691 aa).

Positions 280, 341, and 376 each coordinate alpha-maltose 1-phosphate. Asp411 acts as the Nucleophile in catalysis. Asn412 serves as a coordination point for alpha-maltose 1-phosphate. The Proton donor role is filled by Glu440. 550–551 (KY) is an alpha-maltose 1-phosphate binding site.

This sequence belongs to the glycosyl hydrolase 13 family. GlgE subfamily. Homodimer.

The enzyme catalyses alpha-maltose 1-phosphate + [(1-&gt;4)-alpha-D-glucosyl](n) = [(1-&gt;4)-alpha-D-glucosyl](n+2) + phosphate. Maltosyltransferase that uses maltose 1-phosphate (M1P) as the sugar donor to elongate linear or branched alpha-(1-&gt;4)-glucans. Is involved in a branched alpha-glucan biosynthetic pathway from trehalose, together with TreS, Mak and GlgB. In Arcanobacterium haemolyticum (strain ATCC 9345 / DSM 20595 / CCM 5947 / CCUG 17215 / LMG 16163 / NBRC 15585 / NCTC 8452 / 11018), this protein is Alpha-1,4-glucan:maltose-1-phosphate maltosyltransferase.